We begin with the raw amino-acid sequence, 228 residues long: Isonitrile hydratase (228 aa).

Cysteine 101 is an active-site residue.

In terms of assembly, homodimer.

The enzyme catalyses N-cyclohexylformamide = cyclohexyl isocyanide + H2O. Its activity is regulated as follows. Sensitive to thiol reagents and oxidizing reagents, but is not influenced by chelators or reducing reagents. Functionally, catalyzes the hydration of cyclohexyl isocyanide to N-cyclohexylformamide. Acts on various isonitriles, but not on nitriles or amides. Probably involved in detoxification. The sequence is that of Isonitrile hydratase (inhA) from Pseudomonas putida (Arthrobacter siderocapsulatus).